A 431-amino-acid chain; its full sequence is L-ornithine N(5)-monooxygenase (431 aa).

FAD contacts are provided by residues 40–48 (EKLPTFSWH) and Q59. K64 provides a ligand contact to substrate. NADP(+)-binding positions include 202–205 (CGQS) and R228. Substrate-binding positions include 242-245 (NSLY) and N273. 273–275 (NYS) lines the NADP(+) pocket. Position 399 to 401 (399 to 401 (TLL)) interacts with FAD. S402 contacts substrate.

This sequence belongs to the lysine N(6)-hydroxylase/L-ornithine N(5)-oxygenase family. Requires FAD as cofactor.

It is found in the cytoplasm. Its subcellular location is the nucleus. The catalysed reaction is L-ornithine + NADPH + O2 = N(5)-hydroxy-L-ornithine + NADP(+) + H2O. The enzyme catalyses L-ornithine + NADH + O2 = N(5)-hydroxy-L-ornithine + NAD(+) + H2O. The protein operates within siderophore biosynthesis; ferrichrome biosynthesis. In terms of biological role, catalyzes the conversion of L-ornithine to N(5)-hydroxyornithine, the first step in the biosynthesis of all hydroxamate-containing siderophores, such as ferrichrome. The sequence is that of L-ornithine N(5)-monooxygenase from Schizosaccharomyces pombe (strain 972 / ATCC 24843) (Fission yeast).